An 871-amino-acid chain; its full sequence is Envelope glycoprotein gp160 (871 aa).

The first 21 residues, 1–21 (MKNLIGITLILIITILGIGFS), serve as a signal peptide directing secretion. Residues 22–684 (TYYTTVFYGV…DITQWLWYIK (663 aa)) lie on the Extracellular side of the membrane. Cysteine 43 and cysteine 63 are disulfide-bonded. N-linked (GlcNAc...) asparagine; by host glycans are attached at residues asparagine 77, asparagine 124, asparagine 127, asparagine 142, asparagine 153, asparagine 157, asparagine 185, asparagine 194, asparagine 229, asparagine 238, asparagine 259, asparagine 273, asparagine 285, asparagine 289, asparagine 297, asparagine 329, asparagine 345, asparagine 352, asparagine 384, asparagine 387, asparagine 395, asparagine 398, asparagine 438, asparagine 451, and asparagine 496. Intrachain disulfides connect cysteine 108–cysteine 202, cysteine 115–cysteine 193, cysteine 120–cysteine 154, cysteine 215–cysteine 244, and cysteine 225–cysteine 236. A V1 region spans residues 120–153 (CTMTNTTNKTLNSATTTLTPTVNLSSIPNYEVYN). Residues 154–193 (CSFNQTTEFRDKKKQIYSLFYREDIVKEDGNNNSYYLHNC) are V2. The V3 stretch occupies residues 292 to 325 (CERTGNNTRGQVQIGPGMTFYNIENVVGDTRKAY). An intrachain disulfide couples cysteine 292 to cysteine 326. Disulfide bonds link cysteine 376–cysteine 435 and cysteine 383–cysteine 408. The tract at residues 383–408 (CNLTNWTNTWTANRTNNTHGTLVAPC) is V4. The V5 stretch occupies residues 451 to 458 (NNSYTPQF). A fusion peptide region spans residues 502-522 (RDVGIGLLFLGFLSAAGSTMG). Residues 567-583 (LQARMLAVEKYIRDQQL) form an immunosuppression region. N-linked (GlcNAc...) asparagine; by host glycosylation is found at asparagine 602, asparagine 613, asparagine 626, and asparagine 638. Residues 645–668 (SLLEKAQTQQEKNKQELLELDKWS) adopt a coiled-coil conformation. The interval 663-684 (ELDKWSSLWDWFDITQWLWYIK) is MPER; binding to GalCer. Residues 685–705 (IAIIIVAGLVGLRILMFIVNV) form a helical membrane-spanning segment. The Cytoplasmic segment spans residues 706 to 871 (VKQVRQGYTP…IRQGLELALN (166 aa)). A YXXL motif; contains endocytosis signal motif is present at residues 713-716 (YTPL).

As to quaternary structure, the mature envelope protein (Env) consists of a homotrimer of non-covalently associated gp120-gp41 heterodimers. The resulting complex protrudes from the virus surface as a spike. Interacts with host CD4 and CCR5. Gp120 also interacts with the C-type lectins CD209/DC-SIGN and CLEC4M/DC-SIGNR (collectively referred to as DC-SIGN(R)). The mature envelope protein (Env) consists of a homotrimer of non-covalently associated gp120-gp41 heterodimers. The resulting complex protrudes from the virus surface as a spike. Specific enzymatic cleavages in vivo yield mature proteins. Envelope glycoproteins are synthesized as an inactive precursor that is heavily N-glycosylated and processed likely by host cell furin in the Golgi to yield the mature SU and TM proteins. The cleavage site between SU and TM requires the minimal sequence [KR]-X-[KR]-R.

Its subcellular location is the virion membrane. The protein localises to the host cell membrane. It is found in the host endosome membrane. The surface protein gp120 (SU) attaches the virus to the host lymphoid cell by binding to the primary receptor CD4. This interaction induces a structural rearrangement creating a high affinity binding site for a chemokine coreceptor like CCR5. This peculiar 2 stage receptor-interaction strategy allows gp120 to maintain the highly conserved coreceptor-binding site in a cryptic conformation, protected from neutralizing antibodies. These changes are transmitted to the transmembrane protein gp41 and are thought to activate its fusogenic potential by unmasking its fusion peptide. In terms of biological role, surface protein gp120 (SU) may target the virus to gut-associated lymphoid tissue (GALT) by binding host ITGA4/ITGB7 (alpha-4/beta-7 integrins), a complex that mediates T-cell migration to the GALT. Interaction between gp120 and ITGA4/ITGB7 would allow the virus to enter GALT early in the infection, infecting and killing most of GALT's resting CD4+ T-cells. This T-cell depletion is believed to be the major insult to the host immune system leading to AIDS. Functionally, the surface protein gp120 is a ligand for CD209/DC-SIGN and CLEC4M/DC-SIGNR, which are respectively found on dendritic cells (DCs), and on endothelial cells of liver sinusoids and lymph node sinuses. These interactions allow capture of viral particles at mucosal surfaces by these cells and subsequent transmission to permissive cells. DCs are professional antigen presenting cells, critical for host immunity by inducing specific immune responses against a broad variety of pathogens. They act as sentinels in various tissues where they take up antigen, process it, and present it to T-cells following migration to lymphoid organs. SIV subverts the migration properties of dendritic cells to gain access to CD4+ T-cells in lymph nodes. Virus transmission to permissive T-cells occurs either in trans (without DCs infection, through viral capture and transmission), or in cis (following DCs productive infection, through the usual CD4-gp120 interaction), thereby inducing a robust infection. In trans infection, bound virions remain infectious over days and it is proposed that they are not degraded, but protected in non-lysosomal acidic organelles within the DCs close to the cell membrane thus contributing to the viral infectious potential during DCs' migration from the periphery to the lymphoid tissues. On arrival at lymphoid tissues, intact virions recycle back to DCs' cell surface allowing virus transmission to CD4+ T-cells. Virion capture also seems to lead to MHC-II-restricted viral antigen presentation, and probably to the activation of SIV-specific CD4+ cells. Its function is as follows. The transmembrane protein gp41 (TM) acts as a class I viral fusion protein. Under the current model, the protein has at least 3 conformational states: pre-fusion native state, pre-hairpin intermediate state, and post-fusion hairpin state. During fusion of viral and target intracellular membranes, the coiled coil regions (heptad repeats) assume a trimer-of-hairpins structure, positioning the fusion peptide in close proximity to the C-terminal region of the ectodomain. The formation of this structure appears to drive apposition and subsequent fusion of viral and target cell membranes. Complete fusion occurs in host cell endosomes. The virus undergoes clathrin-dependent internalization long before endosomal fusion, thus minimizing the surface exposure of conserved viral epitopes during fusion and reducing the efficacy of inhibitors targeting these epitopes. Membranes fusion leads to delivery of the nucleocapsid into the cytoplasm. The envelope glycoprotein gp160 precursor down-modulates cell surface CD4 antigen by interacting with it in the endoplasmic reticulum and blocking its transport to the cell surface. In terms of biological role, the gp120-gp41 heterodimer allows rapid transcytosis of the virus through CD4 negative cells such as simple epithelial monolayers of the intestinal, rectal and endocervical epithelial barriers. Both gp120 and gp41 specifically recognize glycosphingolipids galactosyl-ceramide (GalCer) or 3' sulfo-galactosyl-ceramide (GalS) present in the lipid rafts structures of epithelial cells. Binding to these alternative receptors allows the rapid transcytosis of the virus through the epithelial cells. This transcytotic vesicle-mediated transport of virions from the apical side to the basolateral side of the epithelial cells does not involve infection of the cells themselves. The sequence is that of Envelope glycoprotein gp160 from Simian immunodeficiency virus (isolate TAN1) (SIV-cpz).